Consider the following 224-residue polypeptide: MSEDLYEDDLDTQGSSGPRHPMAERFRGYLPVVVDVETGGFNSATDALLEIAAVTIGMDEKGFLFPEHTYFHRVEPFEGANIEPAALEFTGIKLDHPLRMAVSEESAMTDIFRGVRKALKANGCKRAILVGHNSSFDLGFLNAAVARNDLKRNPFHPFSSFDTATLAGLAYGQTVLARACQSADIDFDGREAHSARYDTEKTAELFCGIVNRWKEMGGWRDFND.

Over residues Met1–Asp11 the composition is skewed to acidic residues. Positions Met1–Met22 are disordered. The Exonuclease domain maps to Val32–Phe206. Residues Asp35, Glu37, His193, and Asp198 each coordinate Mg(2+). The active-site Proton donor/acceptor is the His193.

This sequence belongs to the RNase T family. As to quaternary structure, homodimer. The cofactor is Mg(2+).

Functionally, trims short 3' overhangs of a variety of RNA species, leaving a one or two nucleotide 3' overhang. Responsible for the end-turnover of tRNA: specifically removes the terminal AMP residue from uncharged tRNA (tRNA-C-C-A). Also appears to be involved in tRNA biosynthesis. The polypeptide is Ribonuclease T (Pseudomonas putida (strain ATCC 700007 / DSM 6899 / JCM 31910 / BCRC 17059 / LMG 24140 / F1)).